The sequence spans 396 residues: Chorismate synthase (396 aa).

Positions 40 and 46 each coordinate NADP(+). Residues 134-136 (RSS), 257-258 (QA), G302, 317-321 (KPIPS), and R343 contribute to the FMN site.

This sequence belongs to the chorismate synthase family. As to quaternary structure, homotetramer. FMNH2 is required as a cofactor.

The catalysed reaction is 5-O-(1-carboxyvinyl)-3-phosphoshikimate = chorismate + phosphate. Its pathway is metabolic intermediate biosynthesis; chorismate biosynthesis; chorismate from D-erythrose 4-phosphate and phosphoenolpyruvate: step 7/7. Its function is as follows. Catalyzes the anti-1,4-elimination of the C-3 phosphate and the C-6 proR hydrogen from 5-enolpyruvylshikimate-3-phosphate (EPSP) to yield chorismate, which is the branch point compound that serves as the starting substrate for the three terminal pathways of aromatic amino acid biosynthesis. This reaction introduces a second double bond into the aromatic ring system. This Bifidobacterium animalis subsp. lactis (strain AD011) protein is Chorismate synthase.